The following is a 347-amino-acid chain: Phenylalanine--tRNA ligase alpha subunit (347 aa).

Glu-265 is a Mg(2+) binding site.

This sequence belongs to the class-II aminoacyl-tRNA synthetase family. Phe-tRNA synthetase alpha subunit type 1 subfamily. In terms of assembly, tetramer of two alpha and two beta subunits. Mg(2+) serves as cofactor.

The protein localises to the cytoplasm. It catalyses the reaction tRNA(Phe) + L-phenylalanine + ATP = L-phenylalanyl-tRNA(Phe) + AMP + diphosphate + H(+). The protein is Phenylalanine--tRNA ligase alpha subunit of Mycolicibacterium gilvum (strain PYR-GCK) (Mycobacterium gilvum (strain PYR-GCK)).